Here is a 553-residue protein sequence, read N- to C-terminus: Coiled-coil domain-containing protein 85A (553 aa).

Positions 1-28 (MSKAAGGAAAAAAAAESCSPAPAGSSAA) are enriched in low complexity. The interval 1–37 (MSKAAGGAAAAAAAAESCSPAPAGSSAAPPAPVEDLS) is disordered. 2 coiled-coil regions span residues 43-109 (ELLQ…RDLC) and 137-169 (MHKEVALYLQKLKDLEVKQEEVVKENMELKELC). 3 disordered regions span residues 203–414 (YVRD…GMNE), 433–461 (ENRMLPQASQNRRQPPTRNSSNMEKGWGS), and 491–518 (SGADGSNSSPNSAASFSGHATPSQQPEP). Residues 209–220 (DGSSTSSTGSTD) are compositionally biased toward low complexity. Residues 236 to 260 (HLQKPRSEGSPEHSKHRSASPEHPQ) are compositionally biased toward basic and acidic residues. The span at 376 to 389 (GGSGGSGGSGGGSR) shows a compositional bias: gly residues. Positions 391-403 (GTLRRQAQEDGSP) are enriched in basic and acidic residues. The stretch at 412–443 (MNESTLSYVRQLEARVRQLEEENRMLPQASQN) forms a coiled coil. Over residues 439 to 455 (QASQNRRQPPTRNSSNM) the composition is skewed to polar residues. Residues 491–508 (SGADGSNSSPNSAASFSG) are compositionally biased toward low complexity. Position 541 is an asymmetric dimethylarginine (R541).

It belongs to the CCDC85 family. In terms of assembly, may interact with ARVCF; CTNND1; CTNND2 and PKP4.

It is found in the cell junction. The protein localises to the adherens junction. Its function is as follows. May play a role in cell-cell adhesion and epithelium development through its interaction with proteins of the beta-catenin family. This is Coiled-coil domain-containing protein 85A (CCDC85A) from Homo sapiens (Human).